The sequence spans 507 residues: MINDLRTVPAALDRLVRQLPDHTALIAEDRRFTSTELRDAVYGAAAALIALGVEPADRVAIWSPNTWHWVVACLAIHHAGAAVVPLNTRYTATEATDILDRAGAPVLFAAGLFLGADRAAGLDRAALPALRHVVRVPVEADDGTWDEFIATGAGALDAVAARAAAVAPQDVSDILFTSGTTGRSKGVLCAHRQSLSASASWAANGKITSDDRYLCINPFFHNFGYKAGILACLQTGATLIPHVTFDPLHALRAIERHRITVLPGPPTIYQSLLDHPARKDFDLSSLRFAVTGAATVPVVLVERMQSELDIDIVLTAYGLTEANGMGTMCRPEDDAVTVATTCGRPFADFELRIADDGEVLLRGPNVMVGYLDDTEATAAAIDADGWLHTGDIGAVDQAGNLRITDRLKDMYICGGFNVYPAEVEQVLARMDGVADAAVIGVPDQRLGEVGRAFVVARPGTGLDEASVIAYTREHLANFKTPRSVRFVDVLPRNAAGKVSKPQLRELG.

ATP contacts are provided by residues 177–185 (TSGTTGRSK), aspartate 391, arginine 406, and lysine 497.

This sequence belongs to the ATP-dependent AMP-binding enzyme family.

It carries out the reaction 3-[(3aS,4S,7aS)-7a-methyl-1,5-dioxo-octahydro-1H-inden-4-yl]propanoate + ATP + CoA = 3-[(3aS,4S,7aS)-7a-methyl-1,5-dioxo-octahydro-1H-inden-4-yl]propanoyl-CoA + AMP + diphosphate. The catalysed reaction is 5-hydroxy-3-[(3aS,4S,5R,7aS)-7a-methyl-1,5-dioxo-octahydro-1H-inden-4-yl]propanoate + ATP + CoA = 3-[(3aS,4S,5R,7aS)-5-hydroxy-7a-methyl-1-oxo-octahydro-1H-inden-4-yl]propanoyl-CoA + AMP + diphosphate. Its function is as follows. Involved in the catabolism of the rings C and D of cholesterol. Catalyzes the ATP-dependent CoA thioesterification of 3aalpha-H-4alpha(3'-propanoate)-7abeta-methylhexahydro-1,5-indanedione (HIP) to yield HIP-CoA. It can also use the hydroxylated analogs of HIP, 5alpha-OH HIP and 1beta-OH HIP. It requires that the side chain at C17 is completely removed. The polypeptide is 3-[(3aS,4S,7aS)-7a-methyl-1,5-dioxo-octahydro-1H-inden-4-yl]propanoyl:CoA ligase (Mycobacterium tuberculosis (strain ATCC 25618 / H37Rv)).